Consider the following 336-residue polypeptide: HTH-type transcriptional regulator CdhR (336 aa).

Positions 213-311 (VQVIGEMERH…AASPSQDRAV (99 aa)) constitute an HTH araC/xylS-type domain. DNA-binding regions (H-T-H motif) lie at residues 230–251 (LELAERIQVTRRQLERLFRVHL) and 278–301 (VLQVSLACGFESPSYFSRSYRARF). Positions 305 to 336 (PSQDRAVLPLKAPAATPPGAPAGHRTPRAERG) are disordered.

Functionally, induces the transcription of the PA5384-PA5388 operon in response to carnitine. This operon is involved in the degradation of L-carnitine, and allows P.aeruginosa to grow on L-carnitine as the sole source of carbon and nitrogen. In Pseudomonas aeruginosa (strain ATCC 15692 / DSM 22644 / CIP 104116 / JCM 14847 / LMG 12228 / 1C / PRS 101 / PAO1), this protein is HTH-type transcriptional regulator CdhR (cdhR).